The following is a 146-amino-acid chain: UPF0260 protein Swoo_2117 (146 aa).

Belongs to the UPF0260 family.

This Shewanella woodyi (strain ATCC 51908 / MS32) protein is UPF0260 protein Swoo_2117.